Reading from the N-terminus, the 457-residue chain is Siroheme synthase (457 aa).

The interval Met-1–Thr-204 is precorrin-2 dehydrogenase /sirohydrochlorin ferrochelatase. Residues Asp-22 to Val-23 and Leu-43 to Ala-44 contribute to the NAD(+) site. Ser-128 bears the Phosphoserine mark. The interval Gly-216–His-457 is uroporphyrinogen-III C-methyltransferase. Pro-225 is an S-adenosyl-L-methionine binding site. Asp-248 functions as the Proton acceptor in the catalytic mechanism. The Proton donor role is filled by Lys-270. Residues Gly-301–Asp-303, Ile-306, Thr-331–Ala-332, Met-382, and Gly-411 contribute to the S-adenosyl-L-methionine site.

It in the N-terminal section; belongs to the precorrin-2 dehydrogenase / sirohydrochlorin ferrochelatase family. In the C-terminal section; belongs to the precorrin methyltransferase family.

The catalysed reaction is uroporphyrinogen III + 2 S-adenosyl-L-methionine = precorrin-2 + 2 S-adenosyl-L-homocysteine + H(+). The enzyme catalyses precorrin-2 + NAD(+) = sirohydrochlorin + NADH + 2 H(+). It carries out the reaction siroheme + 2 H(+) = sirohydrochlorin + Fe(2+). It participates in cofactor biosynthesis; adenosylcobalamin biosynthesis; precorrin-2 from uroporphyrinogen III: step 1/1. It functions in the pathway cofactor biosynthesis; adenosylcobalamin biosynthesis; sirohydrochlorin from precorrin-2: step 1/1. Its pathway is porphyrin-containing compound metabolism; siroheme biosynthesis; precorrin-2 from uroporphyrinogen III: step 1/1. The protein operates within porphyrin-containing compound metabolism; siroheme biosynthesis; siroheme from sirohydrochlorin: step 1/1. It participates in porphyrin-containing compound metabolism; siroheme biosynthesis; sirohydrochlorin from precorrin-2: step 1/1. Its function is as follows. Multifunctional enzyme that catalyzes the SAM-dependent methylations of uroporphyrinogen III at position C-2 and C-7 to form precorrin-2 via precorrin-1. Then it catalyzes the NAD-dependent ring dehydrogenation of precorrin-2 to yield sirohydrochlorin. Finally, it catalyzes the ferrochelation of sirohydrochlorin to yield siroheme. In Shigella dysenteriae serotype 1 (strain Sd197), this protein is Siroheme synthase.